Consider the following 354-residue polypeptide: Fructose-bisphosphate aldolase (354 aa).

Ser50 is a D-glyceraldehyde 3-phosphate binding site. Asp83 serves as the catalytic Proton donor. Zn(2+)-binding residues include His84, Asp105, Glu142, and His198. Residue Gly199 participates in dihydroxyacetone phosphate binding. His232 serves as a coordination point for Zn(2+). Dihydroxyacetone phosphate is bound by residues Gly233–Ser235 and Asn275–Thr278.

It belongs to the class II fructose-bisphosphate aldolase family. Zn(2+) is required as a cofactor.

The catalysed reaction is beta-D-fructose 1,6-bisphosphate = D-glyceraldehyde 3-phosphate + dihydroxyacetone phosphate. The protein operates within carbohydrate degradation; glycolysis; D-glyceraldehyde 3-phosphate and glycerone phosphate from D-glucose: step 4/4. Its function is as follows. Catalyzes the aldol condensation of dihydroxyacetone phosphate (DHAP or glycerone-phosphate) with glyceraldehyde 3-phosphate (G3P) to form fructose 1,6-bisphosphate (FBP) in gluconeogenesis and the reverse reaction in glycolysis. The polypeptide is Fructose-bisphosphate aldolase (fba) (Stutzerimonas stutzeri (Pseudomonas stutzeri)).